A 207-amino-acid polypeptide reads, in one-letter code: Ion-translocating oxidoreductase complex subunit G (207 aa).

The helical transmembrane segment at 11–31 (GILLGFIALLCTIISTGIFFL) threads the bilayer. An FMN phosphoryl threonine modification is found at T175.

This sequence belongs to the RnfG family. In terms of assembly, the complex is composed of six subunits: RnfA, RnfB, RnfC, RnfD, RnfE and RnfG. FMN serves as cofactor.

The protein localises to the cell inner membrane. Its function is as follows. Part of a membrane-bound complex that couples electron transfer with translocation of ions across the membrane. This chain is Ion-translocating oxidoreductase complex subunit G, found in Haemophilus influenzae (strain 86-028NP).